The sequence spans 269 residues: uncharacterized protein (269 aa).

Residues 52–262 (KNVYEQLVAT…RKILVESINK (211 aa)) adopt a coiled-coil conformation.

This is an uncharacterized protein from Caenorhabditis elegans.